Here is a 263-residue protein sequence, read N- to C-terminus: MRRRAPGETVAPYRHRGDRRHLTALAKRLAAWLRASMPDLERAEPDMPLEDRAADTWEPLIIVADHAGGDWPTRARNAAVDLLAEAADNDQGSLRTRLLVDCRTAFGDHPTLSTTELLRQLNSDPEAPWPTYGKTGLNAAKLSKLLAEFDIRSANVRFPDGTQAKGYQRAHFFDAWTRYCPDAPHDRPEGVPSQPSQASHRRSERDGLTLWDGISRPNDEPDPDLWDGTSRPTAPSRPSLTCIGTAGTAGTDTPPSTNTKGAA.

Residues 183–263 form a disordered region; that stretch reads APHDRPEGVP…PPSTNTKGAA (81 aa). Composition is skewed to polar residues over residues 230–239 and 253–263; these read SRPTAPSRPS and TPPSTNTKGAA.

Its function is as follows. Probably does not play a direct role in plasmid integration or excision. This is an uncharacterized protein from Saccharopolyspora erythraea (Streptomyces erythraeus).